Reading from the N-terminus, the 348-residue chain is Anthranilate phosphoribosyltransferase (348 aa).

Residues G81, 84–85, T89, 91–94, 109–117, and S121 each bind 5-phospho-alpha-D-ribose 1-diphosphate; these read GD, NIST, and KHGNRAMSS. G81 lines the anthranilate pocket. A Mg(2+)-binding site is contributed by S93. N112 is an anthranilate binding site. Residue R167 participates in anthranilate binding. Positions 226 and 227 each coordinate Mg(2+).

This sequence belongs to the anthranilate phosphoribosyltransferase family. In terms of assembly, homodimer. Mg(2+) serves as cofactor.

It carries out the reaction N-(5-phospho-beta-D-ribosyl)anthranilate + diphosphate = 5-phospho-alpha-D-ribose 1-diphosphate + anthranilate. The protein operates within amino-acid biosynthesis; L-tryptophan biosynthesis; L-tryptophan from chorismate: step 2/5. In terms of biological role, catalyzes the transfer of the phosphoribosyl group of 5-phosphorylribose-1-pyrophosphate (PRPP) to anthranilate to yield N-(5'-phosphoribosyl)-anthranilate (PRA). The sequence is that of Anthranilate phosphoribosyltransferase from Thermomicrobium roseum (strain ATCC 27502 / DSM 5159 / P-2).